Here is a 503-residue protein sequence, read N- to C-terminus: uncharacterized protein (503 aa).

A helical membrane pass occupies residues 26-46 (ILFLLLGLIILVNISINVATA). 4 disordered regions span residues 155–176 (RPLS…MSQM), 311–381 (YDAR…ESHE), 436–456 (QISD…NPGG), and 472–503 (VQEN…GKLN). Composition is skewed to basic and acidic residues over residues 311 to 322 (YDARDQWRRGTE) and 334 to 346 (NPRE…DHNS). Polar residues predominate over residues 348–367 (AHRQNFSSHTHSQPNHSPPQ). Over residues 493–503 (SLHRSRTGKLN) the composition is skewed to basic residues.

The protein localises to the membrane. This is an uncharacterized protein from Mus musculus (Mouse).